We begin with the raw amino-acid sequence, 256 residues long: 1-(5-phosphoribosyl)-5-[(5-phosphoribosylamino)methylideneamino] imidazole-4-carboxamide isomerase (256 aa).

The Proton acceptor role is filled by Asp-8. Catalysis depends on Asp-130, which acts as the Proton donor.

Belongs to the HisA/HisF family.

Its subcellular location is the cytoplasm. The enzyme catalyses 1-(5-phospho-beta-D-ribosyl)-5-[(5-phospho-beta-D-ribosylamino)methylideneamino]imidazole-4-carboxamide = 5-[(5-phospho-1-deoxy-D-ribulos-1-ylimino)methylamino]-1-(5-phospho-beta-D-ribosyl)imidazole-4-carboxamide. It participates in amino-acid biosynthesis; L-histidine biosynthesis; L-histidine from 5-phospho-alpha-D-ribose 1-diphosphate: step 4/9. The chain is 1-(5-phosphoribosyl)-5-[(5-phosphoribosylamino)methylideneamino] imidazole-4-carboxamide isomerase from Pelodictyon phaeoclathratiforme (strain DSM 5477 / BU-1).